Consider the following 665-residue polypeptide: Fermitin family homolog 3 (665 aa).

Tyr11 carries the post-translational modification Phosphotyrosine. The region spanning 229 to 556 is the FERM domain; it reads WLDSSRCLMQ…SLPDFGISYV (328 aa). One can recognise a PH domain in the interval 354–453; sequence DHLRIFRPRK…WMAGCRLASK (100 aa). Tyr502 carries the post-translational modification Phosphotyrosine. Phosphothreonine is present on Thr589.

The protein belongs to the kindlin family. Interacts with ITGB1, ITGB2 and ITGB3 (via cytoplasmic tails).

It is found in the cell projection. Its subcellular location is the podosome. In terms of biological role, plays a central role in cell adhesion in hematopoietic cells. Acts by activating the integrin beta-1-3 (ITGB1, ITGB2 and ITGB3). Required for integrin-mediated platelet adhesion and leukocyte adhesion to endothelial cells. Required for activation of integrin beta-2 (ITGB2) in polymorphonuclear granulocytes (PMNs). The protein is Fermitin family homolog 3 (FERMT3) of Bos taurus (Bovine).